Reading from the N-terminus, the 767-residue chain is Polyribonucleotide nucleotidyltransferase (767 aa).

Mg(2+) contacts are provided by Asp488 and Asp494. The KH domain maps to 555-614; the sequence is PRLYTMKINPEKIRDVIGKGGSVIRALTEETGCQIDIGEDGTITIASTDADKAELAKKRI. Residues 624 to 692 enclose the S1 motif domain; it reads GKVYEGPVVK…EKGRIKLSMK (69 aa). Positions 700-742 are enriched in basic and acidic residues; that stretch reads GMEFEERAPRREGGFGDRGDRGDRGPRRDRGGDRPERGERPAR. The interval 700–767 is disordered; sequence GMEFEERAPR…QPQQQQGQQQ (68 aa). Positions 752–767 are enriched in low complexity; sequence GAPAAGQPQQQQGQQQ.

It belongs to the polyribonucleotide nucleotidyltransferase family. The cofactor is Mg(2+).

Its subcellular location is the cytoplasm. It catalyses the reaction RNA(n+1) + phosphate = RNA(n) + a ribonucleoside 5'-diphosphate. In terms of biological role, involved in mRNA degradation. Catalyzes the phosphorolysis of single-stranded polyribonucleotides processively in the 3'- to 5'-direction. In Leptothrix cholodnii (strain ATCC 51168 / LMG 8142 / SP-6) (Leptothrix discophora (strain SP-6)), this protein is Polyribonucleotide nucleotidyltransferase.